The chain runs to 452 residues: Glutamyl-tRNA(Gln) amidotransferase subunit A (452 aa).

Active-site charge relay system residues include Lys-56 and Ser-131. Ser-155 (acyl-ester intermediate) is an active-site residue.

The protein belongs to the amidase family. GatA subfamily. Heterotrimer of A, B and C subunits.

The catalysed reaction is L-glutamyl-tRNA(Gln) + L-glutamine + ATP + H2O = L-glutaminyl-tRNA(Gln) + L-glutamate + ADP + phosphate + H(+). In terms of biological role, allows the formation of correctly charged Gln-tRNA(Gln) through the transamidation of misacylated Glu-tRNA(Gln) in organisms which lack glutaminyl-tRNA synthetase. The reaction takes place in the presence of glutamine and ATP through an activated gamma-phospho-Glu-tRNA(Gln). This Campylobacter hominis (strain ATCC BAA-381 / DSM 21671 / CCUG 45161 / LMG 19568 / NCTC 13146 / CH001A) protein is Glutamyl-tRNA(Gln) amidotransferase subunit A.